Consider the following 275-residue polypeptide: MINQGIKAALNPIAFQGGPFTIHWYGVIIASGVVLALLLAVREGKREGIPEDDFYDYLLWALPIAIICARIYYVVFQWSYYSQHPSEIIAIWDGGIAIYGAILGGFIVLLVFCHYRHLSSWLMMDIIAPTLIMAQGIGRWGNFMNQEAFGDITTRAHLMAQHIPNWIINQMYIGGHYRIPTFLYESLWDLTGFALLMLLRHRKHLFRRGEIFLTYVMWYAFGRFFIEGMRTDSLMLGSIRISQLLSIVFFVSALIILIIRRHKNIPWYYNGINKN.

4 consecutive transmembrane segments (helical) span residues 20–40 (FTIH…LLLA), 58–78 (LLWA…VFQW), 88–108 (IIAI…GFIV), and 118–138 (LSSW…QGIG). Position 139 (Arg-139) interacts with a 1,2-diacyl-sn-glycero-3-phospho-(1'-sn-glycerol). 2 helical membrane-spanning segments follow: residues 209-229 (GEIF…IEGM) and 239-259 (IRIS…ILII).

The protein belongs to the Lgt family.

The protein resides in the cell membrane. It catalyses the reaction L-cysteinyl-[prolipoprotein] + a 1,2-diacyl-sn-glycero-3-phospho-(1'-sn-glycerol) = an S-1,2-diacyl-sn-glyceryl-L-cysteinyl-[prolipoprotein] + sn-glycerol 1-phosphate + H(+). The protein operates within protein modification; lipoprotein biosynthesis (diacylglyceryl transfer). Functionally, catalyzes the transfer of the diacylglyceryl group from phosphatidylglycerol to the sulfhydryl group of the N-terminal cysteine of a prolipoprotein, the first step in the formation of mature lipoproteins. This Limosilactobacillus reuteri (strain DSM 20016) (Lactobacillus reuteri) protein is Phosphatidylglycerol--prolipoprotein diacylglyceryl transferase.